Consider the following 394-residue polypeptide: MTLRRLRKLQQKEEATAAPDLAGRAPDSEAARAAPTPSGPPAAAAPPGAPGDELYAALEDYHPAELYRALAVSGGTLPRRKGSGFRWKNFTQSPEQQRKVLTLEKGDNQTFGFEIQTYGLHHREEQRVEMVTFVCRVHESSPAQLAGLTPGDTIASVNGLNVEGIRHREIVDIIKASGNVLRLETLYGTSIRKAELEARLQYLKQTLYEKWGEYRSLMVQEQRLVHGLVVKDPSIYDTLESVRSCLYGAGLLPGSLPFGPLLAAPGGARGGSRRAKGDTDDAVYHTCFFGGAEPQALPPPPPPARAPGPGSAETPASVLCPAPRATLSRSASVRCAGPGGGGGGGAPGALWTEAREQALCGAGLRKTKYRSFRRRLLKFIPGLNRSLEEEESQL.

The tract at residues 1–51 (MTLRRLRKLQQKEEATAAPDLAGRAPDSEAARAAPTPSGPPAAAAPPGAPG) is disordered. Over residues 37–49 (PSGPPAAAAPPGA) the composition is skewed to pro residues. Position 76 is a phosphothreonine (Thr-76). At Ser-93 the chain carries Phosphoserine. The region spanning 100–189 (VLTLEKGDNQ…VLRLETLYGT (90 aa)) is the PDZ domain. The segment at 180–257 (VLRLETLYGT…GAGLLPGSLP (78 aa)) is interaction with PSCD3. Tyr-236 carries the phosphotyrosine modification. Arg-269 is modified (omega-N-methylarginine). A disordered region spans residues 293–318 (EPQALPPPPPPARAPGPGSAETPASV). Residues 296–306 (ALPPPPPPARA) show a composition bias toward pro residues. Ser-386 carries the post-translational modification Phosphoserine.

Heteromer. Composed of TAMALIN, CYTH2 and at least one GRM1. Also interacts with CYTH3, GRM2, GRM3 and GRM5. In terms of tissue distribution, expressed in brain.

The protein resides in the cytoplasm. Its subcellular location is the perinuclear region. The protein localises to the cell membrane. It is found in the postsynaptic cell membrane. Functionally, plays a role in intracellular trafficking and contributes to the macromolecular organization of group 1 metabotropic glutamate receptors (mGluRs) at synapses. This is General receptor for phosphoinositides 1-associated scaffold protein from Rattus norvegicus (Rat).